The chain runs to 431 residues: Keratin, type I cytoskeletal 20 (431 aa).

The tract at residues 1 to 23 is disordered; it reads MDFSRQSFHRSLSSSSQGPALSM. Residues 1–76 are head; it reads MDFSRQSFHR…SNGSDLFGGN (76 aa). Serine 13 is subject to Phosphoserine; by MAPKAPK2, MAPKAPK3 and PKC. Residues serine 16 and serine 26 each carry the phosphoserine modification. A coil 1A region spans residues 77–112; that stretch reads GKLAMQNLNDRLANYLEKVRSLEQSNSRLEAQIKQW. One can recognise an IF rod domain in the interval 77 to 388; sequence GKLAMQNLND…RLLEGEDIKT (312 aa). The linker 1 stretch occupies residues 113–130; it reads YETNAPSTIRDYSSYYAQ. The tract at residues 131–222 is coil 1B; it reads IKELQNQVKD…KEHQEEVEVL (92 aa). Positions 223–245 are linker 12; sequence RRQLGNNVNVEVDAAPGLNLGEI. Residues 246–384 are coil 2; it reads MNEMRQRYEV…ATYRRLLEGE (139 aa). The interval 385 to 431 is tail; the sequence is DIKTTEYQLSTLEMKDIKKTRKIKTVVEEVVDGKVVSSEVKEIEESV.

It belongs to the intermediate filament family. Heterotetramer of two type I and two type II keratins. Associates with KRT8. In terms of processing, hyperphosphorylation at Ser-13 occurs during the early stages of apoptosis but becomes less prominent during the later stages. Phosphorylation at Ser-13 also increases in response to stress brought on by cell injury. Proteolytically cleaved by caspases during apoptosis. Cleavage occurs at Asp-235. In terms of tissue distribution, expressed at low levels in the more differentiated suprabasal regions of the small intestine, and at higher levels in the colon, mainly in the upper region and in scattered cells throughout the remaining epithelium. Also expressed in epithelial cells of bladder, ileum and stomach and at lower levels in pancreas and earskin. The phosphorylated form is nearly exclusively expressed in goblet cells of the small intestine and in the lumen-proximal cells of the colon (at protein level). Also expressed in jejunum and duodenum.

Its function is as follows. Plays a significant role in maintaining keratin filament organization in intestinal epithelia. When phosphorylated, plays a role in the secretion of mucin in the small intestine. The chain is Keratin, type I cytoskeletal 20 from Mus musculus (Mouse).